We begin with the raw amino-acid sequence, 214 residues long: Isochorismatase family protein 2B (214 aa).

It belongs to the isochorismatase family.

The polypeptide is Isochorismatase family protein 2B (Dictyostelium discoideum (Social amoeba)).